The sequence spans 2179 residues: MGAQVSTQKSGSHENQNILTNGSNQTFTVINYYKDAASTSSAGQSLSMDPSKFTEPVKDLMLKGAPALNSPNVEACGYSDRVQQITLGNSTITTQEAANAVVCYAEWPEYLPDVDASDVNKTSKPDTSVCRFYTLDSKTWTTGSKGWCWKLPDALKDMGVFGQNMFFHSLGRSGYTVHVQCNATKFHSGCLLVVVIPEHQLASHEGGNVSVKYTFTHPGERGIDLSSANEVGGPVKDVIYNMNGTLLGNLLIFPHQFINLRTNNTATIVIPYINSVPIDSMTRHNNVSLMVIPIAPLTVPTGATPSLPITVTIAPMCTEFSGIRSKSIVPQGLPTTTLPGSGQFLTTDDRQSPSALPNYEPTPRIHIPGKVHNLLEIIQVDTLIPMNNTHTKDEVNSYLIPLNANRQNEQVFGTNLFIGDGVFKTTLLGEIVQYYTHWSGSLRFSLMYTGPALSSAKLILAYTPPGARGPQDRREAMLGTHVVWDIGLQSTIVMTIPWTSGVQFRYTDPDTYTSAGFLSCWYQTSLILPPETTGQVYLLSFISACPDFKLRLMKDTQTISQTVALTEGLGDELEEVIVEKTKQTVASISSGPKHTQKVPILTANETGATMPVLPSDSIETRTTYMHFNGSETDVECFLGRAACVHVTEIQNKDATGIDNHREAKLFNDWKINLSSLVQLRKKLELFTYVRFDSEYTILATASQPDSANYSSNLVVQAMYVPPGAPNPKEWDDYTWQSASNPSVFFKVGDTSRFSVPYVGLASAYNCFYDGYSHDDAETQYGITVLNHMGSMAFRIVNEHDEHKTLVKIRVYHRAKHVEAWIPRAPRALPYTSIGRTNYPKNTEPVIKKRKGDIKSYGLGPRYGGIYTSNVKIMNYHLMTPEDHHNLIAPYPNRDLAIVSTGGHGAETIPHCNCTSGVYYSTYYRKYYPIICEKPTNIWIEGNPYYPSRFQAGVMKGVGPAEPGDCGGILRCIHGPIGLLTAGGSGYVCFADIRQLECIAEEQGLSDYITGLGRAFGVGFTDQISTKVTELQEVAKDFLTTKVLSKVVKMVSALVIICRNHDDLVTVTATLALLGCDGSPWRFLKMYISKHFQVPYIERQANDGWFRKFNDACNAAKGLEWIANKISKLIEWIKNKVLPQAKEKLEFCSKLKQLDILERQITTMHISNPTQEKREQLFNNVLWLEQMSQKFAPLYAVESKRIRELKNKMVNYMQFKSKQRIEPVCVLIHGTPGSGKSLTTSIVGRAIAEHFNSAVYSLPPDPKHFDGYQQQEVVIMDDLNQNPDGQDISMFCQMVSSVDFLPPMASLDNKGMLFTSNFVLASTNSNTLSPPTILNPEALVRRFGFDLDICLHTTYTKNGKLNAGMSTKTCKDCHQPSNFKKCCPLVCGKAISLVDRTTNIRYSVDQLVTAIISDFKSKMQITDSLETLFQGPVYKDLEIDVCNTPPPECINDLLKSVDSEEIREYCKKKKWIIPEIPTNIERAMNQASMIINTILMFVSTLGIVYVIYKLFAQTQGPYSGNPPHNKLKAPTLRPVVVQGPNTEFALSLLRKNIMTITTSKGEFTGLGIHDRVCVIPTHAQPGDDVLVNGQKIRVKDKYKLVDPENINLELTVLTLDRNEKFRDIRGFISEDLEGVDATLVVHSNNFTNTILEVGPVTMAGLINLSSTPTNRMIRYDYATKTGQCGGVLCATGKIFGIHVGGNGRQGFSAQLKKQYFVEKQGQVIARHKVREFNINPVNTPTKSKLHPSVFYDVFPGDKEPAVLSDNDPRLEVKLTESLFSKYKGNVNTEPTENMLVAVDHYAGQLLSLDIPTSELTLKEALYGVDGLEPIDITTSAGFPYVSLGIKKRDILNKETQDTEKMKFYLDKYGIDLPLVTYIKDELRSVDKVRLGKSRLIEASSLNDSVNMRMKLGNLYKAFHQNPGVLTGSAVGCDPDVFWSVIPCLMDGHLMAFDYSNFDASLSPVWFVCLEKVLTKLGFAGSSLIQSICNTHHIFRDEIYVVEGGMPSGCSGTSIFNSMINNIIIRTLILDAYKGIDLDKLKILAYGDDLIVSYPYELDPQVLATLGKNYGLTITPPDKSETFTKMTWENLTFLKRYFKPDQQFPFLVHPVMPMKDIHESIRWTKDPKNTQDHVRSLCMLAWHSGEKEYNEFIQKIRTTDIGKCLILPEYSVLRRRWLDLF.

The tract at residues 1-20 (MGAQVSTQKSGSHENQNILT) is disordered. The N-myristoyl glycine; by host moiety is linked to residue glycine 2. At 2-1491 (GAQVSTQKSG…AMNQASMIIN (1490 aa)) the chain is on the cytoplasmic side. Residues 564–584 (ALTEGLGDELEEVIVEKTKQT) are amphipathic alpha-helix. Residues histidine 876 and aspartate 894 each act as for protease 2A activity in the active site. Zn(2+)-binding residues include cysteine 911 and cysteine 913. Cysteine 965 (for protease 2A activity) is an active-site residue. 2 residues coordinate Zn(2+): cysteine 971 and histidine 973. The membrane-binding stretch occupies residues 1101–1173 (NDGWFRKFND…HISNPTQEKR (73 aa)). The oligomerization stretch occupies residues 1101 to 1239 (NDGWFRKFND…TPGSGKSLTT (139 aa)). The RNA-binding stretch occupies residues 1122 to 1126 (ANKIS). One can recognise an SF3 helicase domain in the interval 1205 to 1361 (KNKMVNYMQF…TTYTKNGKLN (157 aa)). Zn(2+) contacts are provided by cysteine 1369, cysteine 1372, cysteine 1381, and cysteine 1386. A C4-type zinc finger spans residues 1369 to 1386 (CKDCHQPSNFKKCCPLVC). Residues 1413–1420 (DFKSKMQI) form an RNA-binding region. Positions 1424-1429 (LETLFQ) are oligomerization. An intramembrane segment occupies 1492 to 1507 (TILMFVSTLGIVYVIY). Topologically, residues 1508 to 2179 (KLFAQTQGPY…VLRRRWLDLF (672 aa)) are cytoplasmic. Tyrosine 1517 carries the O-(5'-phospho-RNA)-tyrosine modification. Positions 1538-1715 (GPNTEFALSL…FSAQLKKQYF (178 aa)) constitute a Peptidase C3 domain. Catalysis depends on for protease 3C activity residues histidine 1577, glutamate 1608, and cysteine 1683. The RdRp catalytic domain maps to 1946–2060 (GHLMAFDYSN…SYPYELDPQV (115 aa)). Mg(2+) is bound by residues aspartate 1952 and aspartate 2046.

Belongs to the picornaviruses polyprotein family. In terms of assembly, interacts with capsid protein VP1 and capsid protein VP3 to form heterotrimeric protomers. As to quaternary structure, interacts with capsid protein VP0, and capsid protein VP3 to form heterotrimeric protomers. Five protomers subsequently associate to form pentamers which serve as building blocks for the capsid. Interacts with capsid protein VP2, capsid protein VP3 and capsid protein VP4 following cleavage of capsid protein VP0. Interacts with host ICAM1. Interacts with capsid protein VP1 and capsid protein VP3 in the mature capsid. In terms of assembly, interacts with capsid protein VP0 and capsid protein VP1 to form heterotrimeric protomers. Five protomers subsequently associate to form pentamers which serve as building blocks for the capsid. Interacts with capsid protein VP4 in the mature capsid. Interacts with protein 2C; this interaction may be important for virion morphogenesis. As to quaternary structure, interacts with capsid protein VP1 and capsid protein VP3. Homodimer. In terms of assembly, homohexamer; forms a hexameric ring structure with 6-fold symmetry characteristic of AAA+ ATPases. Interacts (via N-terminus) with host RTN3 (via reticulon domain); this interaction is important for viral replication. Interacts with capsid protein VP3; this interaction may be important for virion morphogenesis. As to quaternary structure, interacts with protein 3CD. Homodimer. Interacts with host GBF1. Interacts (via GOLD domain) with host ACBD3 (via GOLD domain); this interaction allows the formation of a viral protein 3A/ACBD3 heterotetramer with a 2:2 stoichiometry, which will stimulate the recruitment of host PI4KB in order to synthesize PI4P at the viral RNA replication sites. In terms of assembly, interacts with RNA-directed RNA polymerase. As to quaternary structure, interacts with protein 3AB and with RNA-directed RNA polymerase. Interacts with Viral protein genome-linked and with protein 3CD. Requires Mg(2+) as cofactor. Specific enzymatic cleavages in vivo by the viral proteases yield processing intermediates and the mature proteins. In terms of processing, myristoylation is required for the formation of pentamers during virus assembly. Further assembly of 12 pentamers and a molecule of genomic RNA generates the provirion. Post-translationally, during virion maturation, immature virions are rendered infectious following cleavage of VP0 into VP4 and VP2. This maturation seems to be an autocatalytic event triggered by the presence of RNA in the capsid and it is followed by a conformational change infectious virion. Myristoylation is required during RNA encapsidation and formation of the mature virus particle. In terms of processing, VPg is uridylylated by the polymerase into VPg-pUpU. This acts as a nucleotide-peptide primer for the genomic RNA replication.

It is found in the virion. Its subcellular location is the host cytoplasm. It localises to the host cytoplasmic vesicle membrane. The protein localises to the host nucleus. It catalyses the reaction a ribonucleoside 5'-triphosphate + H2O = a ribonucleoside 5'-diphosphate + phosphate + H(+). It carries out the reaction Selective cleavage of Tyr-|-Gly bond in the picornavirus polyprotein.. The catalysed reaction is RNA(n) + a ribonucleoside 5'-triphosphate = RNA(n+1) + diphosphate. The enzyme catalyses Selective cleavage of Gln-|-Gly bond in the poliovirus polyprotein. In other picornavirus reactions Glu may be substituted for Gln, and Ser or Thr for Gly.. With respect to regulation, replication or transcription is subject to high level of random mutations by the nucleotide analog ribavirin. Functionally, forms an icosahedral capsid of pseudo T=3 symmetry with capsid proteins VP2 and VP3. The capsid is 300 Angstroms in diameter, composed of 60 copies of each capsid protein and enclosing the viral positive strand RNA genome. Capsid protein VP1 mainly forms the vertices of the capsid. Capsid protein VP1 interacts with host ICAM1 to provide virion attachment to target host cells. This attachment induces virion internalization. Tyrosine kinases are probably involved in the entry process. After binding to its receptor, the capsid undergoes conformational changes. Capsid protein VP1 N-terminus (that contains an amphipathic alpha-helix) and capsid protein VP4 are externalized. Together, they shape a pore in the host membrane through which viral genome is translocated to host cell cytoplasm. After genome has been released, the channel shrinks. Its function is as follows. Forms an icosahedral capsid of pseudo T=3 symmetry with capsid proteins VP2 and VP3. The capsid is 300 Angstroms in diameter, composed of 60 copies of each capsid protein and enclosing the viral positive strand RNA genome. In terms of biological role, lies on the inner surface of the capsid shell. After binding to the host receptor, the capsid undergoes conformational changes. Capsid protein VP4 is released, Capsid protein VP1 N-terminus is externalized, and together, they shape a pore in the host membrane through which the viral genome is translocated into the host cell cytoplasm. Component of immature procapsids, which is cleaved into capsid proteins VP4 and VP2 after maturation. Allows the capsid to remain inactive before the maturation step. Functionally, cysteine protease that cleaves viral polyprotein and specific host proteins. It is responsible for the autocatalytic cleavage between the P1 and P2 regions, which is the first cleavage occurring in the polyprotein. Also cleaves the host translation initiation factor EIF4G1, in order to shut down the capped cellular mRNA translation. Inhibits the host nucleus-cytoplasm protein and RNA trafficking by cleaving host members of the nuclear pores including NUP62 and NUP153. Counteracts stress granule formation probably by antagonizing its assembly or promoting its dissassembly. Its function is as follows. Plays an essential role in the virus replication cycle by acting as a viroporin. Creates a pore in the host endoplasmic reticulum and as a consequence releases Ca2+ in the cytoplasm of infected cell. In turn, high levels of cytoplasmic calcium may trigger membrane trafficking and transport of viral ER-associated proteins to viroplasms, sites of viral genome replication. In terms of biological role, induces and associates with structural rearrangements of intracellular membranes. Displays RNA-binding, nucleotide binding and NTPase activities. May play a role in virion morphogenesis and viral RNA encapsidation by interacting with the capsid protein VP3. Localizes the viral replication complex to the surface of membranous vesicles. Together with protein 3CD binds the Cis-Active RNA Element (CRE) which is involved in RNA synthesis initiation. Acts as a cofactor to stimulate the activity of 3D polymerase, maybe through a nucleid acid chaperone activity. Functionally, localizes the viral replication complex to the surface of membranous vesicles. It inhibits host cell endoplasmic reticulum-to-Golgi apparatus transport and causes the disassembly of the Golgi complex, possibly through GBF1 interaction. This would result in depletion of MHC, trail receptors and IFN receptors at the host cell surface. Plays an essential role in viral RNA replication by recruiting ACBD3 and PI4KB at the viral replication sites, thereby allowing the formation of the rearranged membranous structures where viral replication takes place. Its function is as follows. Acts as a primer for viral RNA replication and remains covalently bound to viral genomic RNA. VPg is uridylylated prior to priming replication into VPg-pUpU. The oriI viral genomic sequence may act as a template for this. The VPg-pUpU is then used as primer on the genomic RNA poly(A) by the RNA-dependent RNA polymerase to replicate the viral genome. During genome replication, the VPg-RNA linkage is removed by the host TDP2, thereby accelerating replication. During the late stage of the replication cycle, host TDP2 is excluded from sites of viral RNA synthesis and encapsidation, allowing for the generation of progeny virions. In terms of biological role, involved in the viral replication complex and viral polypeptide maturation. It exhibits protease activity with a specificity and catalytic efficiency that is different from protease 3C. Protein 3CD lacks polymerase activity. Protein 3CD binds to the 5'UTR of the viral genome. Major viral protease that mediates proteolytic processing of the polyprotein. Cleaves host EIF5B, contributing to host translation shutoff. Cleaves also host PABPC1, contributing to host translation shutoff. Cleaves host NLRP1, triggers host N-glycine-mediated degradation of the autoinhibitory NLRP1 N-terminal fragment. Functionally, replicates the viral genomic RNA on the surface of intracellular membranes. May form linear arrays of subunits that propagate along a strong head-to-tail interaction called interface-I. Covalently attaches UMP to a tyrosine of VPg, which is used to prime RNA synthesis. The positive stranded RNA genome is first replicated at virus induced membranous vesicles, creating a dsRNA genomic replication form. This dsRNA is then used as template to synthesize positive stranded RNA genomes. ss(+)RNA genomes are either translated, replicated or encapsidated. This Homo sapiens (Human) protein is Genome polyprotein.